The primary structure comprises 340 residues: Cobalt-precorrin-5B C(1)-methyltransferase (340 aa).

Belongs to the CbiD family.

The enzyme catalyses Co-precorrin-5B + S-adenosyl-L-methionine = Co-precorrin-6A + S-adenosyl-L-homocysteine. Its pathway is cofactor biosynthesis; adenosylcobalamin biosynthesis; cob(II)yrinate a,c-diamide from sirohydrochlorin (anaerobic route): step 6/10. Its function is as follows. Catalyzes the methylation of C-1 in cobalt-precorrin-5B to form cobalt-precorrin-6A. This is Cobalt-precorrin-5B C(1)-methyltransferase from Methanococcoides burtonii (strain DSM 6242 / NBRC 107633 / OCM 468 / ACE-M).